Consider the following 710-residue polypeptide: Low-temperature-induced 78 kDa protein (710 aa).

3 disordered regions span residues 1-198 (MDQT…LDGQ), 225-269 (YQSK…RDLS), and 305-507 (GFGD…STYT). Residues 14-25 (QHPEEVEHHENG) show a composition bias toward basic and acidic residues. Over residues 29–41 (MFRKVKARAKKFK) the composition is skewed to basic residues. Residues 49–58 (QSNEHEQDHD) show a composition bias toward basic and acidic residues. Residues 59–73 (LVEEDDDDDELEPEV) show a composition bias toward acidic residues. The segment covering 138–168 (SDKEEKRDVPIHHPLSELSDREESRETHHES) has biased composition (basic and acidic residues). The segment covering 169 to 187 (LNTPVSLLSGTEDVTSTFA) has biased composition (polar residues). A run of 5 repeats spans residues 303-316 (PVGF…ELEK), 317-331 (DFPT…KTET), 336-350 (NSPS…KTES), 357-370 (PMGF…ELEK), and 398-412 (NFPV…KNES). The tract at residues 303–370 (PVGFGDESGA…GSESGAELEK (68 aa)) is 2 X 14 AA repeats of P-[MV]-G-F-G-[DS]-E-S-G-A-E-L-E-K. Composition is skewed to basic and acidic residues over residues 313–331 (ELEK…KTET), 340–352 (RSHE…ESGN), 367–380 (ELEK…DSGR), 402–418 (RSHE…DKDV), 442–466 (EDKF…KTET), and 475–487 (SHPK…KESR). Residues 317–412 (DFPTRSHDFD…SHELDLKNES (96 aa)) form a 3 X 15 AA repeats of [DN]-[FS]-P-[STV]-R-S-H-[DE]-[FL]-D-[LM]-K-[NT]-E-[ST] region. 3 consecutive repeat copies span residues 510–514 (FASML), 532–536 (VDEKL), and 550–554 (VTTKL). Residues 510 to 600 (FASMLGYSGE…AFSDMVAEKL (91 aa)) are 5 X 5 AA repeats of [FV]-[ADT]-[EST]-[KM]-L. The segment at 537-577 (TPVNEKDQETESAVTTKLPISGGGSGVEEQRGEDKSVSGRD) is disordered. Residues 564–577 (EEQRGEDKSVSGRD) are compositionally biased toward basic and acidic residues. 2 tandem repeats follow at residues 579–583 (VAEKL) and 596–600 (VAEKL). A disordered region spans residues 601–710 (QIGGEEEKKE…STVVPVQKEL (110 aa)). The span at 605–626 (EEEKKETTTKEVEKISTEKAAS) shows a compositional bias: basic and acidic residues. S626 bears the Phosphoserine mark. The span at 638-654 (GGGGMVGRIKGWFGGGA) shows a compositional bias: gly residues. 2 tandem repeats follow at residues 648-670 (GWFG…EEAP) and 674-696 (GWFG…EESP). The interval 648–696 (GWFGGGATDEVKPESPHSVEEAPKSSGWFGGGATEEVKPKSPHSVEESP) is 2 X 23 AA repeats. Basic and acidic residues-rich tracts occupy residues 656-670 (DEVK…EEAP) and 682-693 (EEVKPKSPHSVE).

This sequence belongs to the LTI78/LTI65 family. In terms of tissue distribution, accumulates rapidly in leaves, stems, roots, flower petals, filaments, and sepals during cold-acclimation.

It is found in the cytoplasm. Its function is as follows. Involved in responses to abiotic stresses. Regulates probably root elongation in cold conditions. This is Low-temperature-induced 78 kDa protein from Arabidopsis thaliana (Mouse-ear cress).